Reading from the N-terminus, the 341-residue chain is Glyceraldehyde-3-phosphate dehydrogenase 1 (341 aa).

NAD(+) is bound by residues 13–14, Asp35, and Lys85; that span reads RI. D-glyceraldehyde 3-phosphate contacts are provided by residues 157 to 159, Thr188, 217 to 218, and Arg240; these read SCT and TG. Cys158 serves as the catalytic Nucleophile. Residue Asn322 participates in NAD(+) binding.

The protein belongs to the glyceraldehyde-3-phosphate dehydrogenase family. Homotetramer.

The protein resides in the cytoplasm. The enzyme catalyses D-glyceraldehyde 3-phosphate + phosphate + NAD(+) = (2R)-3-phospho-glyceroyl phosphate + NADH + H(+). It functions in the pathway carbohydrate degradation; glycolysis; pyruvate from D-glyceraldehyde 3-phosphate: step 1/5. The sequence is that of Glyceraldehyde-3-phosphate dehydrogenase 1 (gpd-1) from Caenorhabditis elegans.